Reading from the N-terminus, the 218-residue chain is Thiopurine S-methyltransferase (218 aa).

4 residues coordinate S-adenosyl-L-methionine: Trp10, Leu45, Glu66, and Arg123.

The protein belongs to the class I-like SAM-binding methyltransferase superfamily. TPMT family.

It localises to the cytoplasm. It carries out the reaction S-adenosyl-L-methionine + a thiopurine = S-adenosyl-L-homocysteine + a thiopurine S-methylether.. This Shewanella oneidensis (strain ATCC 700550 / JCM 31522 / CIP 106686 / LMG 19005 / NCIMB 14063 / MR-1) protein is Thiopurine S-methyltransferase.